The sequence spans 1249 residues: DNA-directed RNA polymerase subunit beta (1249 aa).

The protein belongs to the RNA polymerase beta chain family. The RNAP catalytic core consists of 2 alpha, 1 beta, 1 beta' and 1 omega subunit. When a sigma factor is associated with the core the holoenzyme is formed, which can initiate transcription.

The enzyme catalyses RNA(n) + a ribonucleoside 5'-triphosphate = RNA(n+1) + diphosphate. Its function is as follows. DNA-dependent RNA polymerase catalyzes the transcription of DNA into RNA using the four ribonucleoside triphosphates as substrates. The chain is DNA-directed RNA polymerase subunit beta from Clostridium botulinum (strain Eklund 17B / Type B).